Here is a 281-residue protein sequence, read N- to C-terminus: Nucleotide-binding protein Daro_0070 (281 aa).

8-15 (GLSGSGKS) lines the ATP pocket. Position 57 to 60 (57 to 60 (DARS)) interacts with GTP.

It belongs to the RapZ-like family.

In terms of biological role, displays ATPase and GTPase activities. This Dechloromonas aromatica (strain RCB) protein is Nucleotide-binding protein Daro_0070.